The following is a 406-amino-acid chain: 3-oxoacyl-[acyl-carrier-protein] synthase 1 (406 aa).

One can recognise a Ketosynthase family 3 (KS3) domain in the interval 1 to 403 (MRRTVITGFG…GTNATLIFKR (403 aa)). Active-site for beta-ketoacyl synthase activity residues include C162, H297, and H332.

Belongs to the thiolase-like superfamily. Beta-ketoacyl-ACP synthases family. Homodimer.

The protein resides in the cytoplasm. It carries out the reaction a fatty acyl-[ACP] + malonyl-[ACP] + H(+) = a 3-oxoacyl-[ACP] + holo-[ACP] + CO2. The enzyme catalyses (3Z)-decenoyl-[ACP] + malonyl-[ACP] + H(+) = 3-oxo-(5Z)-dodecenoyl-[ACP] + holo-[ACP] + CO2. It functions in the pathway lipid metabolism; fatty acid biosynthesis. Functionally, involved in the type II fatty acid elongation cycle. Catalyzes the elongation of a wide range of acyl-ACP by the addition of two carbons from malonyl-ACP to an acyl acceptor. Can also use unsaturated fatty acids. Catalyzes a key reaction in unsaturated fatty acid (UFA) synthesis, the elongation of the cis-3-decenoyl-ACP produced by FabA. The sequence is that of 3-oxoacyl-[acyl-carrier-protein] synthase 1 (fabB) from Haemophilus influenzae (strain ATCC 51907 / DSM 11121 / KW20 / Rd).